A 154-amino-acid polypeptide reads, in one-letter code: Protein AE7-like 1 (154 aa).

Belongs to the MIP18 family.

In terms of biological role, may play a role in chromosome segregation through establishment of sister chromatid cohesion. Unable to complement ae7 mutants, and thus probably not involved in the cytosolic iron-sulfur assembly (CIA) pathway. The protein is Protein AE7-like 1 of Arabidopsis thaliana (Mouse-ear cress).